Reading from the N-terminus, the 320-residue chain is Polyketide transferase FFUJ_12241 (320 aa).

The tract at residues 58 to 298 (RDITCLAWDP…ILKGKGHLDW (241 aa)) is abhydrolase domain.

Belongs to the polyketide transferase af380 family.

In terms of biological role, polyketide transferase; part of the gene cluster that mediates the biosynthesis of fujikurins A-D, secondary metabolites playing a role during rice infection. The polyketide synthase PKS19 acts with the trans-enoyl reductase FFUJ_12240 and the polyketide transferase FFUJ_12241 to produce fujikurins, however, the biosynthesis pathway has not been identified yet. In Gibberella fujikuroi (strain CBS 195.34 / IMI 58289 / NRRL A-6831) (Bakanae and foot rot disease fungus), this protein is Polyketide transferase FFUJ_12241.